The chain runs to 269 residues: Octanoyltransferase LipM (269 aa).

Residues 31 to 239 (NHGAPVLRFY…GFSEGFEVNF (209 aa)) enclose the BPL/LPL catalytic domain. The active-site Acyl-thioester intermediate is Cys-141.

Belongs to the octanoyltransferase LipM family. Monomer.

The enzyme catalyses octanoyl-[ACP] + L-lysyl-[protein] = N(6)-octanoyl-L-lysyl-[protein] + holo-[ACP] + H(+). It participates in protein modification; protein lipoylation via endogenous pathway; protein N(6)-(lipoyl)lysine from octanoyl-[acyl-carrier-protein]. Functionally, catalyzes the transfer of endogenously produced octanoic acid from octanoyl-acyl-carrier-protein onto the lipoyl domain of GcvH, an intermediate carrier during protein lipoylation. This chain is Octanoyltransferase LipM, found in Carboxydothermus hydrogenoformans (strain ATCC BAA-161 / DSM 6008 / Z-2901).